The chain runs to 907 residues: Catenin alpha-1 (907 aa).

Basic and acidic residues predominate over residues 870–879 (VKREKLDDGQ). Residues 870–895 (VKREKLDDGQTNKVKRSSQKKHINPV) form a disordered region. Basic residues predominate over residues 882–892 (KVKRSSQKKHI).

The protein belongs to the vinculin/alpha-catenin family. As to quaternary structure, interacts with ctnnb1, jupa and cdh2. Interacts with cdh1 during early stages of oogenesis, interaction is no longer present when oocyte develops into the unfertilized egg. In terms of tissue distribution, expressed in the skin (at protein level). Expressed in the ovary.

The protein localises to the cell junction. It localises to the adherens junction. The protein resides in the cytoplasm. Its subcellular location is the cytoskeleton. It is found in the cell membrane. The protein localises to the nucleus. Functionally, associates with the cytoplasmic domain of a variety of cadherins, forming catenin and cadherin complexes which are further linked to the actin filament network and is thereby involved in cell-cell adhesion. Required for embryonic development, via maintenance of adherens junctions that facilitate the maintenance of the epithelial barrier. The chain is Catenin alpha-1 from Danio rerio (Zebrafish).